A 273-amino-acid chain; its full sequence is Homeobox protein ceh-43 (273 aa).

2 disordered regions span residues 47 to 79 and 153 to 204; these read NGATGGSMYGTPQQTSAYAMYPPGPGSSPEEAF and RRSK…LVSS. The segment at residues 102–161 is a DNA-binding region (homeobox); it reads MRKPRTIYNSSQLQMLQKKFQKTQYLALPDRAALAHELGLSQTQVKIWFQNRRSKQKKQK.

The protein belongs to the distal-less homeobox family. In terms of tissue distribution, predominantly expressed in the head hypdodermis, neuronal support cells and CAN neurons.

The protein resides in the nucleus. In terms of biological role, probable transcription factor. Binds to the sequence motif 5'-ATAAT-3' in regulatory elements. Required for development of the anterior hypodermis during embryonic morphogenesis for cell adhesion; also affects embryonic and larval viability. Modulates and maintains dopaminergic neuron differentiation. May activate dopamine pathway genes in concert with ETS domain-containing protein ast-1, and homeobox proteins ceh-40 and ceh-20. The sequence is that of Homeobox protein ceh-43 (ceh-43) from Caenorhabditis elegans.